Reading from the N-terminus, the 144-residue chain is 3-dehydroquinate dehydratase (144 aa).

The Proton acceptor role is filled by tyrosine 23. 3 residues coordinate substrate: asparagine 74, histidine 80, and aspartate 87. Histidine 100 (proton donor) is an active-site residue. Substrate is bound by residues 101–102 (LS) and arginine 111.

The protein belongs to the type-II 3-dehydroquinase family. Homododecamer.

It carries out the reaction 3-dehydroquinate = 3-dehydroshikimate + H2O. The protein operates within metabolic intermediate biosynthesis; chorismate biosynthesis; chorismate from D-erythrose 4-phosphate and phosphoenolpyruvate: step 3/7. In terms of biological role, catalyzes a trans-dehydration via an enolate intermediate. The protein is 3-dehydroquinate dehydratase of Haemophilus ducreyi (strain 35000HP / ATCC 700724).